Here is a 202-residue protein sequence, read N- to C-terminus: Protein FAR-RED ELONGATED HYPOCOTYL 1 (202 aa).

The residue at position 39 (serine 39) is a Phosphoserine. Residues 40 to 43 carry the Nuclear localization sequence (NLS) motif; it reads KKRK. Residues 54 to 57 carry the Nuclear export sequence (NES) motif; that stretch reads LLPL. Threonine 61 carries the phosphothreonine modification.

Belongs to the FHY1 protein family. Homodimer and heterodimer with FHL. Interacts with underphosphorylated PHYA, especially upon far-red (FR) light illumination. Binds to LAF1 and HFR1. Forms PHYA/FHY1/HFR1 complex in darkness but dissociates from PHYA and HFR1 in response to continuous FR light (FRc). In terms of processing, inactivated by rapid reversible PHYA-mediated phosphorylation at Ser-39 and Thr-61 in red light (R), thus inhibiting PHYA signaling in a negative feedback loop; this ensures the seedling deetiolation process in response to a R-enriched light condition. Subsequent exposure to far-red light (FR) after the R conditions leads to dephosphorylation. The phosphorylated form is cytoplasmic only and unable to bind to chromatin at direct target genes whereas the unphosphorylated form can shuttle from cytoplasm to nucleus. In terms of tissue distribution, expressed in hypocotyl cells of etiolated plants.

The protein localises to the nucleus. It is found in the cytoplasm. Key regulator of far red / red (FR/R) spectrum-specific responses essential for the adaption to changing light conditions (e.g. de-etiolation), essentially by regulating PHYA shuttling from the cytoplasm to the nucleus and by directly regulating the expression of some target genes, depending on light conditions and phosphorylation status. Binds chromatin at target genes promoters, especially in FR light conditions. Can activate transcription of different genes, some being in a phytochrome A (PHYA)-dependent and other in a PHYA-independent manners. Controls specific aspects of plant development, such as the inhibition of seed germination under FR during salt stress. Essential for light-regulated PHYA nuclear accumulation and subsequent PHYA phototropic signaling processes involved in photomorphogenesis. Mediates the association of PHYA with HFR1 and LAF1 in the nucleus in response to FR conditions. PHYA-specific signal transducer in response to continuous FR lights. Contributes to inhibition of hypocotyl elongation in continuous blue light (B). In Arabidopsis thaliana (Mouse-ear cress), this protein is Protein FAR-RED ELONGATED HYPOCOTYL 1.